The chain runs to 881 residues: Phosphoenolpyruvate carboxylase (881 aa).

Catalysis depends on residues His-138 and Lys-545.

It belongs to the PEPCase type 1 family. Requires Mg(2+) as cofactor.

The catalysed reaction is oxaloacetate + phosphate = phosphoenolpyruvate + hydrogencarbonate. Functionally, forms oxaloacetate, a four-carbon dicarboxylic acid source for the tricarboxylic acid cycle. The polypeptide is Phosphoenolpyruvate carboxylase (Shewanella oneidensis (strain ATCC 700550 / JCM 31522 / CIP 106686 / LMG 19005 / NCIMB 14063 / MR-1)).